The following is a 149-amino-acid chain: Glycophorin-A (149 aa).

A signal peptide spans 1–19 (MYGKIIFVLLLSAIVSISA). Topologically, residues 20-90 (SSTTEVAMHT…QLVHRFSEPE (71 aa)) are extracellular. An O-linked (GalNAc...) serine glycan is attached at Ser21. Residues Thr22, Thr23, and Thr29 are each glycosylated (O-linked (GalNAc...) threonine). O-linked (GalNAc...) serine glycosylation occurs at Ser30. O-linked (GalNAc...) threonine glycosylation occurs at Thr31. O-linked (GalNAc...) serine glycosylation occurs at Ser32. Thr35 carries an O-linked (GalNAc...) threonine glycan. 2 O-linked (GalNAc...) serine glycosylation sites follow: Ser37 and Ser40. A glycan (O-linked (GalNAc...) threonine) is linked at Thr43. An O-linked (GalNAc...) serine glycan is attached at Ser44. 2 O-linked (GalNAc...) threonine glycosylation sites follow: Thr51 and Thr55. Residue Ser62 is glycosylated (O-linked (GalNAc...) serine). The O-linked (GalNAc...) threonine glycan is linked to Thr68. The chain crosses the membrane as a helical span at residues 91-113 (ITLIIFGVMAGVIGTILLIYYSI). Residues 114 to 149 (RRLIKKSPSDVKPLPSPDTDVPLSSVEIENPETSDQ) are Cytoplasmic-facing. A disordered region spans residues 122–149 (SDVKPLPSPDTDVPLSSVEIENPETSDQ). Phosphoserine occurs at positions 137 and 147.

The protein belongs to the glycophorin-A family. Homodimer. Component of the ankyrin-1 complex in the erythrocyte, composed of ANK1, RHCE, RHAG, SLC4A1, EPB42, GYPA, GYPB and AQP1. Interacts with SLC4A1; a GYPA monomer is bound at each end of the SLC4A1 dimer forming a heterotetramer.

The protein localises to the cell membrane. In terms of biological role, component of the ankyrin-1 complex, a multiprotein complex involved in the stability and shape of the erythrocyte membrane. Glycophorin A is the major intrinsic membrane protein of the erythrocyte. The N-terminal glycosylated segment, which lies outside the erythrocyte membrane, has MN blood group receptors. Appears to be important for the function of SLC4A1 and is required for high activity of SLC4A1. May be involved in translocation of SLC4A1 to the plasma membrane. The chain is Glycophorin-A from Pan troglodytes (Chimpanzee).